A 418-amino-acid chain; its full sequence is Serine hydroxymethyltransferase (418 aa).

Residues Leu118 and 122-124 each bind (6S)-5,6,7,8-tetrahydrofolate; that span reads GHL. Lys227 is subject to N6-(pyridoxal phosphate)lysine. (6S)-5,6,7,8-tetrahydrofolate is bound at residue Glu242.

The protein belongs to the SHMT family. Homodimer. Requires pyridoxal 5'-phosphate as cofactor.

The protein localises to the cytoplasm. The enzyme catalyses (6R)-5,10-methylene-5,6,7,8-tetrahydrofolate + glycine + H2O = (6S)-5,6,7,8-tetrahydrofolate + L-serine. It functions in the pathway one-carbon metabolism; tetrahydrofolate interconversion. It participates in amino-acid biosynthesis; glycine biosynthesis; glycine from L-serine: step 1/1. In terms of biological role, catalyzes the reversible interconversion of serine and glycine with tetrahydrofolate (THF) serving as the one-carbon carrier. This reaction serves as the major source of one-carbon groups required for the biosynthesis of purines, thymidylate, methionine, and other important biomolecules. Also exhibits THF-independent aldolase activity toward beta-hydroxyamino acids, producing glycine and aldehydes, via a retro-aldol mechanism. The sequence is that of Serine hydroxymethyltransferase from Chloroflexus aggregans (strain MD-66 / DSM 9485).